A 201-amino-acid polypeptide reads, in one-letter code: Small ribosomal subunit protein uS4c (201 aa).

The region spanning 89 to 157 (MRLDNILFRL…VQNYIASSDP (69 aa)) is the S4 RNA-binding domain.

This sequence belongs to the universal ribosomal protein uS4 family. In terms of assembly, part of the 30S ribosomal subunit. Contacts protein S5. The interaction surface between S4 and S5 is involved in control of translational fidelity.

It is found in the plastid. Its subcellular location is the chloroplast. Functionally, one of the primary rRNA binding proteins, it binds directly to 16S rRNA where it nucleates assembly of the body of the 30S subunit. In terms of biological role, with S5 and S12 plays an important role in translational accuracy. The protein is Small ribosomal subunit protein uS4c (rps4) of Hordeum vulgare (Barley).